We begin with the raw amino-acid sequence, 347 residues long: Ribosomal RNA small subunit methyltransferase C (347 aa).

This sequence belongs to the methyltransferase superfamily. RsmC family. Monomer.

The protein localises to the cytoplasm. It catalyses the reaction guanosine(1207) in 16S rRNA + S-adenosyl-L-methionine = N(2)-methylguanosine(1207) in 16S rRNA + S-adenosyl-L-homocysteine + H(+). Its function is as follows. Specifically methylates the guanine in position 1207 of 16S rRNA in the 30S particle. In Serratia proteamaculans (strain 568), this protein is Ribosomal RNA small subunit methyltransferase C.